The chain runs to 210 residues: BAG family molecular chaperone regulator 1 (210 aa).

The Ubiquitin-like domain occupies 8–85 (SSVQTTIDIL…IIVMGGKNAL (78 aa)). The region spanning 108 to 194 (AYDLNLRDVA…TLLNQNDALL (87 aa)) is the BAG domain.

Homodimer or homotetramer.

In terms of biological role, may inhibit the chaperone activity of HSP70/HSC70 by promoting substrate release in an ATP-dependent manner. This is BAG family molecular chaperone regulator 1 (bag-1) from Caenorhabditis elegans.